The chain runs to 95 residues: Large ribosomal subunit protein bL28 (95 aa).

The protein belongs to the bacterial ribosomal protein bL28 family.

The sequence is that of Large ribosomal subunit protein bL28 from Zymomonas mobilis subsp. mobilis (strain ATCC 31821 / ZM4 / CP4).